The sequence spans 597 residues: NADPH-dependent diflavin oxidoreductase 1 (597 aa).

A Flavodoxin-like domain is found at 6 to 150; sequence LLVLFGSQTG…AIDPWLQDLW (145 aa). FMN is bound by residues 12–17, 59–62, 97–106, and Asp-132; these read SQTGTA, ATTG, and LGDSSYAKFN. Positions 206–446 constitute an FAD-binding FR-type domain; that stretch reads LQPFLAPMVS…WVRSGGLTFP (241 aa). Residues Arg-350, 382–385, and 416–419 contribute to the FAD site; these read RAFS and GLCS. NADP(+)-binding positions include Thr-460, 515–516, 521–525, and Asp-558; these read SR and KVYVQ. Residue Trp-596 participates in FAD binding.

Belongs to the NADPH-dependent diflavin oxidoreductase NDOR1 family. The protein in the N-terminal section; belongs to the flavodoxin family. This sequence in the C-terminal section; belongs to the flavoprotein pyridine nucleotide cytochrome reductase family. As to quaternary structure, interacts with CIAPIN1; as part of the cytosolic iron-sulfur (Fe-S) protein assembly (CIA) machinery. Interacts with DCPS. FAD is required as a cofactor. The cofactor is FMN.

The protein localises to the cytoplasm. It localises to the perinuclear region. The catalysed reaction is 2 oxidized [2Fe-2S]-[protein] + NADPH = 2 reduced [2Fe-2S]-[protein] + NADP(+) + H(+). In terms of biological role, NADPH-dependent reductase which is a central component of the cytosolic iron-sulfur (Fe-S) protein assembly (CIA) machinery. Transfers electrons from NADPH via its FAD and FMN prosthetic groups to the [2Fe-2S] cluster of CIAPIN1, another key component of the CIA machinery. In turn, this reduced cluster provides electrons for assembly of cytosolic iron-sulfur cluster proteins. It can also reduce the [2Fe-2S] cluster of CISD1 and activate this protein implicated in Fe/S cluster repair. In vitro can fully activate methionine synthase/MTR in the presence of soluble cytochrome b5/CYB5A. In Bos taurus (Bovine), this protein is NADPH-dependent diflavin oxidoreductase 1.